Consider the following 311-residue polypeptide: Chemotaxis protein CheV3 (311 aa).

Residues 13-164 (EIELVDFRIY…LESILDDLKL (152 aa)) form the CheW-like domain. Residues 182-308 (EVLFLDDSKT…FTEEISKILD (127 aa)) form the Response regulatory domain. The residue at position 241 (aspartate 241) is a 4-aspartylphosphate.

Functionally, plays a role in chemotaxis signal transduction system in order to colonize the host stomach. May act as a phosphate sink to control the flow of phosphate to CheAY. This chain is Chemotaxis protein CheV3, found in Helicobacter pylori (strain ATCC 700392 / 26695) (Campylobacter pylori).